Here is a 106-residue protein sequence, read N- to C-terminus: Small ribosomal subunit protein uS10 (106 aa).

Belongs to the universal ribosomal protein uS10 family. Part of the 30S ribosomal subunit.

In terms of biological role, involved in the binding of tRNA to the ribosomes. The chain is Small ribosomal subunit protein uS10 from Caldicellulosiruptor bescii (strain ATCC BAA-1888 / DSM 6725 / KCTC 15123 / Z-1320) (Anaerocellum thermophilum).